Consider the following 326-residue polypeptide: Diaminopimelate epimerase (326 aa).

The substrate site is built by N13 and N72. C81 (proton donor) is an active-site residue. Substrate contacts are provided by residues 82–83, N169, N205, and 223–224; these read GN and ER. C232 functions as the Proton acceptor in the catalytic mechanism. Substrate is bound at residue 233–234; that stretch reads GT.

The protein belongs to the diaminopimelate epimerase family. Homodimer.

The protein localises to the cytoplasm. It catalyses the reaction (2S,6S)-2,6-diaminopimelate = meso-2,6-diaminopimelate. The protein operates within amino-acid biosynthesis; L-lysine biosynthesis via DAP pathway; DL-2,6-diaminopimelate from LL-2,6-diaminopimelate: step 1/1. Functionally, catalyzes the stereoinversion of LL-2,6-diaminopimelate (L,L-DAP) to meso-diaminopimelate (meso-DAP), a precursor of L-lysine and an essential component of the bacterial peptidoglycan. The protein is Diaminopimelate epimerase of Enterococcus faecalis (strain ATCC 700802 / V583).